A 1378-amino-acid polypeptide reads, in one-letter code: Hybrid signal transduction histidine kinase H (1378 aa).

The stretch at 212-242 (KEKFKKEELINDFKSRLETLENKIDQRVDER) forms a coiled coil. Residues 243–314 (IETRFKYVLE…NNNNNNNNNN (72 aa)) enclose the PAS domain. The segment at 294–337 (YQQHNNNNNNNNNNNNNNNNNNNNNSNNKSPIINSPNTTSPTNT) is disordered. The segment covering 298 to 337 (NNNNNNNNNNNNNNNNNNNNNSNNKSPIINSPNTTSPTNT) has biased composition (low complexity). Positions 498-805 (TMSHEMRTPL…SFHFLVEVFF (308 aa)) constitute a Histidine kinase domain. His501 is modified (phosphohistidine; by autocatalysis). Low complexity predominate over residues 663–696 (NNSNNSNNNHNHNNNNNNNNHLNCSGSFNNNGFN). Disordered regions lie at residues 663 to 717 (NNSN…DKHC), 905 to 924 (TNNNNSNNDNNNNNTTSTTT), and 1103 to 1213 (NNSN…HPNP). The span at 697-714 (HGHHHHHHHHHHHHHHHD) shows a compositional bias: basic residues. Low complexity-rich tracts occupy residues 1103–1119 (NNSNNNINNNNNNSGSS) and 1136–1187 (SPSL…NNNN). A compositionally biased stretch (polar residues) spans 1188 to 1206 (LNHYNSDSILSSDLSPQQH). Residues 1244 to 1364 (KIMVAEDSLV…ILAVELKRAW (121 aa)) enclose the Response regulatory domain. A 4-aspartylphosphate modification is found at Asp1297.

Post-translationally, activation probably requires transfer of a phosphate group between a histidine in the kinase core (transmitter) domain and an aspartate of the receiver domain.

It catalyses the reaction ATP + protein L-histidine = ADP + protein N-phospho-L-histidine.. Acts as a receptor histidine kinase for a signal transduction pathway. This protein undergoes an ATP-dependent autophosphorylation at a conserved histidine residue in the kinase core, and a phosphoryl group is then transferred to a conserved aspartate residue in the receiver domain. The polypeptide is Hybrid signal transduction histidine kinase H (dhkH) (Dictyostelium discoideum (Social amoeba)).